Consider the following 184-residue polypeptide: Peptidyl-tRNA hydrolase (184 aa).

A tRNA-binding site is contributed by Tyr17. The active-site Proton acceptor is His22. TRNA is bound by residues Phe71, Asn73, and Asn119.

Belongs to the PTH family. Monomer.

It is found in the cytoplasm. It catalyses the reaction an N-acyl-L-alpha-aminoacyl-tRNA + H2O = an N-acyl-L-amino acid + a tRNA + H(+). Functionally, hydrolyzes ribosome-free peptidyl-tRNAs (with 1 or more amino acids incorporated), which drop off the ribosome during protein synthesis, or as a result of ribosome stalling. Catalyzes the release of premature peptidyl moieties from peptidyl-tRNA molecules trapped in stalled 50S ribosomal subunits, and thus maintains levels of free tRNAs and 50S ribosomes. The protein is Peptidyl-tRNA hydrolase of Corynebacterium diphtheriae (strain ATCC 700971 / NCTC 13129 / Biotype gravis).